A 260-amino-acid chain; its full sequence is UPF0246 protein Tola_0968 (260 aa).

The protein belongs to the UPF0246 family.

This Tolumonas auensis (strain DSM 9187 / NBRC 110442 / TA 4) protein is UPF0246 protein Tola_0968.